Consider the following 132-residue polypeptide: Small ribosomal subunit protein bS6 (132 aa).

Residues 96 to 132 (HAEGPSIQMQKRDERERGDRGDRPDRGDRGERGGFRR) are disordered. The segment covering 105-132 (QKRDERERGDRGDRPDRGDRGERGGFRR) has biased composition (basic and acidic residues).

This sequence belongs to the bacterial ribosomal protein bS6 family.

Functionally, binds together with bS18 to 16S ribosomal RNA. This is Small ribosomal subunit protein bS6 from Cereibacter sphaeroides (strain ATCC 17025 / ATH 2.4.3) (Rhodobacter sphaeroides).